The sequence spans 209 residues: Large ribosomal subunit protein uL3 (209 aa).

The disordered stretch occupies residues Thr-133 to Pro-152. Position 150 is an N5-methylglutamine (Gln-150).

Belongs to the universal ribosomal protein uL3 family. In terms of assembly, part of the 50S ribosomal subunit. Forms a cluster with proteins L14 and L19. Post-translationally, methylated by PrmB.

Functionally, one of the primary rRNA binding proteins, it binds directly near the 3'-end of the 23S rRNA, where it nucleates assembly of the 50S subunit. This chain is Large ribosomal subunit protein uL3, found in Yersinia enterocolitica serotype O:8 / biotype 1B (strain NCTC 13174 / 8081).